Here is a 451-residue protein sequence, read N- to C-terminus: Subtilase-type proteinase psp3 (451 aa).

The signal sequence occupies residues 1–20 (MRVSWISGLLLVAHLAPSSA). An Inhibitor I9 domain is found at 80–161 (YIVMFKPSVD…LVEPDRVMHV (82 aa)). The region spanning 169 to 451 (PWGLARVSHR…PNVLAFNNYE (283 aa)) is the Peptidase S8 domain. Active-site charge relay system residues include aspartate 205, histidine 237, and serine 394.

Belongs to the peptidase S8 family.

This Schizosaccharomyces pombe (strain 972 / ATCC 24843) (Fission yeast) protein is Subtilase-type proteinase psp3 (psp3).